A 154-amino-acid chain; its full sequence is Nuclear cap-binding protein subunit 2-A (154 aa).

Residues tyrosine 10, tyrosine 33, 102-106, 113-117, and 123-124 contribute to the mRNA site; these read RVDWD, RQYGR, and QV. The 79-residue stretch at 30 to 108 folds into the RRM domain; that stretch reads STLYVGNLSF…RLIRVDWDAG (79 aa).

This sequence belongs to the RRM NCBP2 family. Component of the nuclear cap-binding complex (CBC), a heterodimer composed of Cbp80 and Cbp20 that interacts with m7GpppG-capped RNA. Interacts with Ars2.

It localises to the nucleus. Component of the cap-binding complex (CBC), which binds co-transcriptionally to the 5' cap of pre-mRNAs and is involved in various processes such as pre-mRNA splicing and RNA-mediated gene silencing (RNAi). The CBC complex is involved in miRNA-mediated RNA interference via its interaction with Ars2 and is required for primary microRNAs (miRNAs) processing. Also involved in innate immunity via the short interfering RNAs (siRNAs) processing machinery by restricting the viral RNA production. In the CBC complex, Cbp20 recognizes and binds capped RNAs (m7GpppG-capped RNA) but requires Cbp80 to stabilize the movement of its N-terminal loop and lock the CBC into a high affinity cap-binding state with the cap structure. This chain is Nuclear cap-binding protein subunit 2-A (Cbp20-A), found in Drosophila virilis (Fruit fly).